The sequence spans 505 residues: DEAD-box ATP-dependent RNA helicase 41 (505 aa).

The segment at 27 to 56 adopts an HIT-type zinc-finger fold; it reads GEPKCVICSRYGEYICDETNDDVCSLECKQ. The Q motif signature appears at 110–138; that stretch reads LTFTSCGLPPKLLLNLETAGYDFPTPIQM. In terms of domain architecture, Helicase ATP-binding spans 141–318; it reads IPAALTGKSL…GSLAKEIILV (178 aa). An ATP-binding site is contributed by 154–161; sequence ADTGSGKT. A DEAD box motif is present at residues 267–270; the sequence is DEVD. The Helicase C-terminal domain occupies 342–492; the sequence is KKQKLFDILR…AIPKELINLT (151 aa).

It belongs to the DEAD box helicase family. DDX59 subfamily.

It catalyses the reaction ATP + H2O = ADP + phosphate + H(+). This Arabidopsis thaliana (Mouse-ear cress) protein is DEAD-box ATP-dependent RNA helicase 41 (RH41).